We begin with the raw amino-acid sequence, 257 residues long: MSENKLNVIDLHKRYGEHEVLKGVSLQANAGDVISIIGSSGSGKSTFLRCINFLEKPSEGSIVVNGQTINLVRDKDGQLKVADKNQLRLLRTRLTMVFQHFNLWSHMTVLENVMEAPIQVLGLSKQEARERAVKYLAKVGIDERAQGKYPVHLSGGQQQRVSIARALAMEPEVLLFDEPTSALDPELVGEVLRIMQQLAEEGKTMVVVTHEMGFARHVSTHVIFLHQGKIEEEGAPEQLFGNPQSPRLQRFLKGSLK.

The ABC transporter domain maps to L6–L252. Residues S40, G41, G43, K44, S45, and T46 each coordinate ATP.

Belongs to the ABC transporter superfamily. In terms of assembly, the HisPMQJ complex is composed of two ATP-binding proteins (HisP), two transmembrane proteins (HisM and HisQ) and a solute-binding protein (HisJ). The HisPMQ-ArgT complex is composed of two ATP-binding proteins (HisP), two transmembrane proteins (HisM and HisQ) and a solute-binding protein (ArgT).

The protein localises to the cell inner membrane. It catalyses the reaction a polar amino acid(out) + ATP + H2O = a polar amino acid(in) + ADP + phosphate + H(+). It carries out the reaction L-histidine(out) + ATP + H2O = L-histidine(in) + ADP + phosphate + H(+). The catalysed reaction is L-lysine(out) + ATP + H2O = L-lysine(in) + ADP + phosphate + H(+). The enzyme catalyses L-arginine(out) + ATP + H2O = L-arginine(in) + ADP + phosphate + H(+). It catalyses the reaction L-ornithine(out) + ATP + H2O = L-ornithine(in) + ADP + phosphate + H(+). Functionally, part of the ABC transporter complex HisPMQJ involved in histidine transport. Is also part of the ABC transporter complex HisPMQ-ArgT involved in lysine/arginine/ornithine transport. Shows ATPase activity. Responsible for energy coupling to the transport system. The sequence is that of Histidine/lysine/arginine/ornithine transport ATP-binding protein HisP from Escherichia coli (strain K12).